The chain runs to 252 residues: MHNPQSRGHNLSQAMSDQTVTNPAAEAQEGEITPDTPDTVDKVENTPVENVENPAEATPGEEDQASEATSANAADLLEQIAALEAAKASLSQVVEERNSQYIRLAADFENFRKRTQREKEELELQIKCSVIADLLPVVDSFELARTHIQTETEAEEKIHRSYQGVYKQLVECLKRIGVSAMQAKGKPFDPNLHEAVLREATNEHPEGTVIEELKRGYMLGDRVLRHAMVKVAAPPEEGSASNTNPTNDVTDV.

Positions 1-22 (MHNPQSRGHNLSQAMSDQTVTN) are enriched in polar residues. Positions 1-70 (MHNPQSRGHN…EEDQASEATS (70 aa)) are disordered.

The protein belongs to the GrpE family. As to quaternary structure, homodimer.

It is found in the cytoplasm. In terms of biological role, participates actively in the response to hyperosmotic and heat shock by preventing the aggregation of stress-denatured proteins, in association with DnaK and GrpE. It is the nucleotide exchange factor for DnaK and may function as a thermosensor. Unfolded proteins bind initially to DnaJ; upon interaction with the DnaJ-bound protein, DnaK hydrolyzes its bound ATP, resulting in the formation of a stable complex. GrpE releases ADP from DnaK; ATP binding to DnaK triggers the release of the substrate protein, thus completing the reaction cycle. Several rounds of ATP-dependent interactions between DnaJ, DnaK and GrpE are required for fully efficient folding. The protein is Protein GrpE of Thermosynechococcus vestitus (strain NIES-2133 / IAM M-273 / BP-1).